We begin with the raw amino-acid sequence, 179 residues long: Shikimate kinase (179 aa).

An ATP-binding site is contributed by 15-20 (GAGKTS). Thr19 is a binding site for Mg(2+). Substrate-binding residues include Asp37, Arg61, and Gly83. Arg123 lines the ATP pocket. A substrate-binding site is contributed by Arg142.

It belongs to the shikimate kinase family. Monomer. Requires Mg(2+) as cofactor.

It localises to the cytoplasm. It catalyses the reaction shikimate + ATP = 3-phosphoshikimate + ADP + H(+). Its pathway is metabolic intermediate biosynthesis; chorismate biosynthesis; chorismate from D-erythrose 4-phosphate and phosphoenolpyruvate: step 5/7. Functionally, catalyzes the specific phosphorylation of the 3-hydroxyl group of shikimic acid using ATP as a cosubstrate. The polypeptide is Shikimate kinase (Coxiella burnetii (strain CbuG_Q212) (Coxiella burnetii (strain Q212))).